Here is a 479-residue protein sequence, read N- to C-terminus: UDP-glycosyltransferase 85A5 (479 aa).

Residues serine 301, 358-360 (CPQ), 375-383 (HSGWNSTLE), and 397-400 (FAEQ) contribute to the UDP-alpha-D-glucose site.

Belongs to the UDP-glycosyltransferase family. As to expression, expressed in roots, shoots and leaves.

The sequence is that of UDP-glycosyltransferase 85A5 (UGT85A5) from Arabidopsis thaliana (Mouse-ear cress).